The sequence spans 79 residues: Conotoxin ArMSGL-0121 (79 aa).

Residues 1-20 (MSRLGIMVLTLLLLVFIVTS) form the signal peptide. A propeptide spanning residues 21–44 (HQDAGEKQATQRNAINFRWRRSFT) is cleaved from the precursor. Disulfide bonds link cysteine 52–cysteine 64, cysteine 56–cysteine 73, and cysteine 63–cysteine 77. A Leucine amide modification is found at leucine 78.

The protein belongs to the conotoxin O3 superfamily. Expressed by the venom duct.

It localises to the secreted. The protein is Conotoxin ArMSGL-0121 of Conus arenatus (Sand-dusted cone).